The chain runs to 236 residues: uncharacterized protein (236 aa).

This sequence belongs to the RHS family.

This is an uncharacterized protein from Escherichia coli (strain K12).